The following is a 1403-amino-acid chain: DNA-directed RNA polymerase subunit beta' (1403 aa).

Residues Cys71, Cys73, Cys86, and Cys89 each contribute to the Zn(2+) site. Mg(2+) is bound by residues Asp462, Asp464, and Asp466. 4 residues coordinate Zn(2+): Cys811, Cys885, Cys892, and Cys895.

The protein belongs to the RNA polymerase beta' chain family. The RNAP catalytic core consists of 2 alpha, 1 beta, 1 beta' and 1 omega subunit. When a sigma factor is associated with the core the holoenzyme is formed, which can initiate transcription. Mg(2+) serves as cofactor. Zn(2+) is required as a cofactor.

It catalyses the reaction RNA(n) + a ribonucleoside 5'-triphosphate = RNA(n+1) + diphosphate. Its function is as follows. DNA-dependent RNA polymerase catalyzes the transcription of DNA into RNA using the four ribonucleoside triphosphates as substrates. This Bartonella bacilliformis (strain ATCC 35685 / KC583 / Herrer 020/F12,63) protein is DNA-directed RNA polymerase subunit beta'.